The sequence spans 168 residues: Small ribosomal subunit protein uS7c (168 aa).

This sequence belongs to the universal ribosomal protein uS7 family. Part of the 30S ribosomal subunit.

It localises to the plastid. The protein localises to the chloroplast. Functionally, one of the primary rRNA binding proteins, it binds directly to 16S rRNA where it nucleates assembly of the head domain of the 30S subunit. The polypeptide is Small ribosomal subunit protein uS7c (rps7) (Chlamydomonas reinhardtii (Chlamydomonas smithii)).